The chain runs to 468 residues: Protein NEN1 (468 aa).

The Exonuclease domain occupies 11 to 172 (FFDVETTVPK…DDVRMNLEVL (162 aa)). Mg(2+) contacts are provided by D13 and E15. Catalysis depends on H159, which acts as the Proton donor/acceptor. D164 serves as a coordination point for Mg(2+).

It depends on Mg(2+) as a cofactor. Expressed in the sieve elements and phloem pole pericycle cells.

It is found in the cytoplasm. Its subcellular location is the nucleus. Its function is as follows. Probable exonuclease involved in enuclation of sieve elements. In Arabidopsis thaliana (Mouse-ear cress), this protein is Protein NEN1.